Consider the following 700-residue polypeptide: Elongation factor G 1 (700 aa).

One can recognise a tr-type G domain in the interval 8-290 (ERYRNIGISA…AVIEYLPSPI (283 aa)). GTP is bound by residues 17 to 24 (AHIDAGKT), 88 to 92 (DTPGH), and 142 to 145 (NKMD).

It belongs to the TRAFAC class translation factor GTPase superfamily. Classic translation factor GTPase family. EF-G/EF-2 subfamily.

The protein resides in the cytoplasm. In terms of biological role, catalyzes the GTP-dependent ribosomal translocation step during translation elongation. During this step, the ribosome changes from the pre-translocational (PRE) to the post-translocational (POST) state as the newly formed A-site-bound peptidyl-tRNA and P-site-bound deacylated tRNA move to the P and E sites, respectively. Catalyzes the coordinated movement of the two tRNA molecules, the mRNA and conformational changes in the ribosome. This chain is Elongation factor G 1, found in Bordetella avium (strain 197N).